A 309-amino-acid polypeptide reads, in one-letter code: DDRGK domain-containing protein 1 (309 aa).

The Lumenal portion of the chain corresponds to 1-2 (MD). Residues 3 to 23 (LIILVGIAVALLVVIVTLYLL) form a helical membrane-spanning segment. At 24–309 (QKKNAAPETK…ISAGGGEASS (286 aa)) the chain is on the cytoplasmic side. Disordered stretches follow at residues 32 to 53 (TKVA…VPRR) and 79 to 175 (ALPA…KEER). Over residues 87 to 96 (DHEDEGQVDG) the composition is skewed to acidic residues. Over residues 107-175 (LDEKMGAKKR…DAERLAKEER (69 aa)) the composition is skewed to basic and acidic residues. Residues 120-177 (EAKEQKRLQREQELHDREQRKVKEAKEEAERKQQEDLEAEAERKRVDAERLAKEERER) adopt a coiled-coil conformation.

This sequence belongs to the DDRGK1 family. In terms of assembly, interacts with Atg9; the interaction is transient.

It localises to the endoplasmic reticulum membrane. Functionally, substrate adapter for ufmylation, the covalent attachment of the ubiquitin-like modifier UFM1 to substrate proteins. Required for ufmylation of Atg9; protects the nervous system during aging, possibly by stabilizing Atg9 and supporting its function. The chain is DDRGK domain-containing protein 1 from Drosophila melanogaster (Fruit fly).